We begin with the raw amino-acid sequence, 717 residues long: Polyribonucleotide nucleotidyltransferase (717 aa).

Mg(2+) contacts are provided by Asp-495 and Asp-501. The region spanning 562 to 624 (PRMIMIQIPK…TALDSALSQI (63 aa)) is the KH domain. In terms of domain architecture, S1 motif spans 634–703 (GEVYEGKVKS…KTGKYRLSRK (70 aa)).

It belongs to the polyribonucleotide nucleotidyltransferase family. Mg(2+) is required as a cofactor.

It localises to the cytoplasm. It catalyses the reaction RNA(n+1) + phosphate = RNA(n) + a ribonucleoside 5'-diphosphate. Functionally, involved in mRNA degradation. Catalyzes the phosphorolysis of single-stranded polyribonucleotides processively in the 3'- to 5'-direction. The sequence is that of Polyribonucleotide nucleotidyltransferase from Cytophaga hutchinsonii (strain ATCC 33406 / DSM 1761 / CIP 103989 / NBRC 15051 / NCIMB 9469 / D465).